Here is a 666-residue protein sequence, read N- to C-terminus: tRNA 5-methylaminomethyl-2-thiouridine biosynthesis bifunctional protein MnmC (666 aa).

Residues 1 to 245 (MKQYAIQPAT…KREMLCGVME (245 aa)) are tRNA (mnm(5)s(2)U34)-methyltransferase. Residues 270 to 666 (IGGGIASALL…RKLLKGKAVK (397 aa)) form an FAD-dependent cmnm(5)s(2)U34 oxidoreductase region.

This sequence in the N-terminal section; belongs to the methyltransferase superfamily. tRNA (mnm(5)s(2)U34)-methyltransferase family. In the C-terminal section; belongs to the DAO family. FAD serves as cofactor.

Its subcellular location is the cytoplasm. The catalysed reaction is 5-aminomethyl-2-thiouridine(34) in tRNA + S-adenosyl-L-methionine = 5-methylaminomethyl-2-thiouridine(34) in tRNA + S-adenosyl-L-homocysteine + H(+). Its function is as follows. Catalyzes the last two steps in the biosynthesis of 5-methylaminomethyl-2-thiouridine (mnm(5)s(2)U) at the wobble position (U34) in tRNA. Catalyzes the FAD-dependent demodification of cmnm(5)s(2)U34 to nm(5)s(2)U34, followed by the transfer of a methyl group from S-adenosyl-L-methionine to nm(5)s(2)U34, to form mnm(5)s(2)U34. This chain is tRNA 5-methylaminomethyl-2-thiouridine biosynthesis bifunctional protein MnmC, found in Salmonella arizonae (strain ATCC BAA-731 / CDC346-86 / RSK2980).